The primary structure comprises 114 residues: Circadian clock oscillator protein KaiB (114 aa).

Belongs to the KaiB family. May undergo a major conformational rearrangment; in the free state forms homooligomers. When bound to KaiC switches to a monomeric thioredoxin-fold (KaiB(fs)). The active oscillator complex is probably KaiC(6):KaiB(6).

Component of the KaiBC clock protein complex, which constitutes the main circadian regulator in cyanobacteria; it may modify the ATPase activity of KaiC. Its function is as follows. May be a metamorphic protein which reversibly switches between an inactive tetrameric fold and a rare, thioredoxin-like monomeric fold (KaiB(fs)). KaiB(fs) binds phospho-KaiC, and perhaps clock output effectors. The protein is Circadian clock oscillator protein KaiB of Prochlorococcus marinus (strain MIT 9211).